A 595-amino-acid polypeptide reads, in one-letter code: Beta-hexosaminidase 1 (595 aa).

An N-terminal signal peptide occupies residues 1 to 20 (MRFAYLATLAGSLLAGLAQA). A glycan (N-linked (GlcNAc...) asparagine) is linked at N313.

It belongs to the glycosyl hydrolase 20 family.

It catalyses the reaction Hydrolysis of terminal non-reducing N-acetyl-D-hexosamine residues in N-acetyl-beta-D-hexosaminides.. Its function is as follows. Beta-hexosaminidase that shows a broad substrate specificity. The chain is Beta-hexosaminidase 1 from Coccidioides posadasii (strain RMSCC 757 / Silveira) (Valley fever fungus).